Consider the following 269-residue polypeptide: GRF-interacting factor 10 (269 aa).

The tract at residues 1 to 71 (MTAEGEAKNP…GEKDDGACRD (71 aa)) is disordered. Low complexity predominate over residues 22–43 (QQAAPAPAPAQGEVAQEAAVQG). The segment covering 47–69 (EQERDKADREVQGGAGEKDDGAC) has biased composition (basic and acidic residues). The QLQ domain maps to 113–148 (AFTAMQLQELEQQSRVYQYMAARVPVPTHLVFPVWK). The 45-residue stretch at 179–223 (EPEPGRCRRTDGKKWRCWRNTIPNEKYCERHMHRGRKRPVQVFLE) folds into the WRC domain. 2 consecutive short sequence motifs (bipartite nuclear localization signal) follow at residues 184-194 (RCRRTDGKKWR) and 212-216 (RGRKR). Residues 217 to 269 (PVQVFLEDDEPDSASGSKPAAPGKATEGAKKADDKSPSSKKLAVAAPAAVQST) are disordered. A compositionally biased stretch (basic and acidic residues) spans 243-253 (EGAKKADDKSP).

This sequence belongs to the GRF family. In terms of assembly, interacts with GIF1. In terms of tissue distribution, highly expressed in shoots. Expressed in developing leaves.

The protein localises to the nucleus. Functionally, involved in the regulation of cell proliferation in developing shoots and leaves. Does not possess transactivation activity. The sequence is that of GRF-interacting factor 10 from Zea mays (Maize).